A 303-amino-acid polypeptide reads, in one-letter code: Recombination-associated protein RdgC (303 aa).

It belongs to the RdgC family.

The protein localises to the cytoplasm. Its subcellular location is the nucleoid. May be involved in recombination. The polypeptide is Recombination-associated protein RdgC (Serratia proteamaculans (strain 568)).